Consider the following 187-residue polypeptide: Elongation factor P (187 aa).

It belongs to the elongation factor P family.

The protein resides in the cytoplasm. The protein operates within protein biosynthesis; polypeptide chain elongation. Involved in peptide bond synthesis. Stimulates efficient translation and peptide-bond synthesis on native or reconstituted 70S ribosomes in vitro. Probably functions indirectly by altering the affinity of the ribosome for aminoacyl-tRNA, thus increasing their reactivity as acceptors for peptidyl transferase. This is Elongation factor P from Azobacteroides pseudotrichonymphae genomovar. CFP2.